The primary structure comprises 1234 residues: Chromosome-associated kinesin KIF4B (1234 aa).

The region spanning 9-336 (PVRVALRCRP…LRYADRARKI (328 aa)) is the Kinesin motor domain. An ATP-binding site is contributed by 88–95 (GQTGSGKT). Residues 350–999 (ELNHLKQQVQ…IKQKLILLQV (650 aa)) are a coiled coil. Phosphoserine is present on Ser-394. Disordered regions lie at residues 494-513 (EEAQ…AFTT) and 712-737 (KRLK…HGKE). A compositionally biased stretch (polar residues) spans 498–513 (VETSPETSRSSDAFTT). Residues 663–1234 (QWKQKKDKEV…GCSPIEEEAH (572 aa)) form an interaction with PRC1 region. The span at 713–737 (RLKDALQKQREVTDKRKETQSHGKE) shows a compositional bias: basic and acidic residues. The short motif at 793 to 798 (PKLRKC) is the Nuclear localization signal element. Thr-799 is subject to Phosphothreonine. Residues Ser-801, Ser-951, Ser-1001, Ser-1013, Ser-1017, and Ser-1028 each carry the phosphoserine modification. The segment at 1000-1234 (ASRQKHLPND…GCSPIEEEAH (235 aa)) is globular. Disordered regions lie at residues 1007–1030 (PNDT…PSRV), 1052–1076 (VNEH…KPTK), 1122–1143 (RQQG…GSFK), and 1183–1234 (TAPA…EEAH). Residues 1056–1071 (EDGDGDGDSDEGDDEE) are compositionally biased toward acidic residues. The tract at residues 1086–1144 (QGCSCKGWCGNKQCGCRKQKSDCGVDCSCDPTKCRNRQQGKDSLGTVEQTQDSEGSFKL) is CRD; required for [4Fe-4S] cluster binding and localization to the spindle midzone and midbody during anaphase and telophase. Ser-1128 is subject to Phosphoserine. Thr-1183 carries the phosphothreonine modification. Ser-1188 is modified (phosphoserine). Lys-1196 participates in a covalent cross-link: Glycyl lysine isopeptide (Lys-Gly) (interchain with G-Cter in SUMO2). Ser-1227 carries the phosphoserine modification.

Belongs to the TRAFAC class myosin-kinesin ATPase superfamily. Kinesin family. Chromokinesin subfamily. [2Fe-2S] cluster serves as cofactor. [4Fe-4S] cluster is required as a cofactor. As to expression, specifically expressed in testis.

It is found in the nucleus matrix. Its subcellular location is the cytoplasm. It localises to the cytoskeleton. In terms of biological role, iron-sulfur (Fe-S) cluster binding motor protein that has a role in chromosome segregation during mitosis. Translocates PRC1 to the plus ends of interdigitating spindle microtubules during the metaphase to anaphase transition, an essential step for the formation of an organized central spindle midzone and midbody and for successful cytokinesis. May play a role in mitotic chromosomal positioning and bipolar spindle stabilization. This chain is Chromosome-associated kinesin KIF4B (KIF4B), found in Homo sapiens (Human).